We begin with the raw amino-acid sequence, 1475 residues long: Sterol 3-beta-glucosyltransferase (1475 aa).

Disordered regions lie at residues 1 to 73 and 94 to 218; these read MPPP…PPMF and HDRF…EDDK. Residues 8-17 show a composition bias toward low complexity; the sequence is LPLHGPAGAA. The span at 30–40 shows a compositional bias: basic residues; the sequence is RVGKKLQKKRH. The span at 108-118 shows a compositional bias: basic and acidic residues; sequence GPQRDSADRSH. A compositionally biased stretch (basic residues) spans 156 to 168; the sequence is EKHKRKISGHKLL. One can recognise a GRAM 1 domain in the interval 270–315; that stretch reads QDIFEFDQPEAVIEEYPCWLLQSVLLQGYMYITAKHICFYSYLPKK. In terms of domain architecture, PH spans 318–413; the sequence is EVVKSGYLSK…WVKSLQRVIF (96 aa). Disordered stretches follow at residues 492–541, 594–636, and 653–715; these read ARLK…TTNK, SSPR…MEEP, and QILR…PVTP. Residues 505–531 are compositionally biased toward low complexity; that stretch reads QQQQQQHPMQPPMQASARSSMSGSRRA. 2 stretches are compositionally biased toward polar residues: residues 621 to 634 and 653 to 674; these read QQGS…SSME and QILR…SASR. Residues 675 to 686 are compositionally biased toward basic and acidic residues; it reads TEVEKQQRRDPR. A GRAM 2 domain is found at 798–901; sequence RFRAHFALPE…RDDCAVTLLQ (104 aa). UDP-alpha-D-glucose contacts are provided by Ser-989, Arg-990, Asp-992, Ala-1293, His-1295, His-1308, Ser-1311, Gly-1312, Thr-1313, Asp-1332, and Gln-1333. The segment at 1413 to 1475 is disordered; sequence IQVEPDEDEE…RVSPSQQSVA (63 aa). Acidic residues predominate over residues 1416 to 1425; it reads EPDEDEESAE.

This sequence belongs to the glycosyltransferase 28 family.

The protein resides in the cytoplasm. It localises to the preautophagosomal structure membrane. It carries out the reaction a sterol + UDP-alpha-D-glucose = a sterol 3-beta-D-glucoside + UDP + H(+). The enzyme catalyses ergosterol + UDP-alpha-D-glucose = ergosteryl 3-beta-D-glucoside + UDP + H(+). In terms of biological role, sterol glycosyltransferase responsible for the glycosylation of ergosterol to form ergosterol-glucoside. Mediates autophagic degradation of peroxisomes (pexophagy) and is involved in pathogenesis via peroxisome degradation inside appressoria that are developing into the host invasion stage. The protein is Sterol 3-beta-glucosyltransferase of Glomerella lagenarium (Anthracnose fungus).